The chain runs to 417 residues: Acetate kinase (417 aa).

Asn-7 contacts Mg(2+). Lys-14 serves as a coordination point for ATP. Arg-104 lines the substrate pocket. Asp-162 functions as the Proton donor/acceptor in the catalytic mechanism. Residues 222–226 (HLGNG), 297–299 (DMR), and 346–350 (GIGEN) each bind ATP. Residue Glu-401 coordinates Mg(2+).

It belongs to the acetokinase family. Homodimer. Requires Mg(2+) as cofactor. The cofactor is Mn(2+).

It is found in the cytoplasm. It carries out the reaction acetate + ATP = acetyl phosphate + ADP. It functions in the pathway metabolic intermediate biosynthesis; acetyl-CoA biosynthesis; acetyl-CoA from acetate: step 1/2. Its function is as follows. Catalyzes the formation of acetyl phosphate from acetate and ATP. Can also catalyze the reverse reaction. This is Acetate kinase from Chloroherpeton thalassium (strain ATCC 35110 / GB-78).